The sequence spans 568 residues: Kinetochore protein NDC80 homolog (568 aa).

The interval 1–59 is disordered; that stretch reads MRGGAAGKRRTTVGFGGAPPPPPPSIEQQRHLFNSRDSDASFASSRPSSIGLGGRGASD. Basic and acidic residues predominate over residues 28 to 39; sequence QQRHLFNSRDSD. A compositionally biased stretch (low complexity) spans 40–49; sequence ASFASSRPSS. 2 coiled-coil regions span residues 241–334 and 433–469; these read KESL…AEVA and IESK…TKCD.

Belongs to the NDC80/HEC1 family. As to quaternary structure, component of the NDC80 complex, which consists of NDC80, NUF2, SPC24 and SPC25.

It is found in the chromosome. The protein resides in the centromere. Functionally, acts as a component of the essential kinetochore-associated NDC80 complex, which is required for chromosome segregation and spindle checkpoint activity to ensure proper cell division. This is Kinetochore protein NDC80 homolog from Arabidopsis thaliana (Mouse-ear cress).